The sequence spans 416 residues: Enterobactin exporter EntS (416 aa).

Residues 1–21 (MNKQSWLLNLSLLKTHPAFRA) lie on the Cytoplasmic side of the membrane. Residues 22-42 (VFLARFISIVSLGLLGVAVPV) form a helical membrane-spanning segment. Residues 43 to 55 (QIQMMTHSTWQVG) are Periplasmic-facing. A helical transmembrane segment spans residues 56–76 (LSVTLTGGAMFVGLMVGGVLA). Topologically, residues 77-83 (DRYERKK) are cytoplasmic. A helical transmembrane segment spans residues 84–104 (VILLARGTCGIGFIGLCLNAL). Residues 105 to 109 (LPEPS) lie on the Periplasmic side of the membrane. A helical membrane pass occupies residues 110 to 130 (LLAIYLLGLWDGFFASLGVTA). The Cytoplasmic portion of the chain corresponds to 131–156 (LLAATPALVGRENLMQAGAITMLTVR). A helical membrane pass occupies residues 157–177 (LGSVNSPMIGGLLLAIGGVAW). Asn178 is a topological domain (periplasmic). Residues 179–199 (YGLAAAGTFITLLPLLSLPAL) traverse the membrane as a helical segment. Topologically, residues 200-218 (PPPPQPREHPLKSLLAGFR) are cytoplasmic. The chain crosses the membrane as a helical span at residues 219–239 (FLLASPLVGGIALLGGLLTMA). At 240–256 (SAVRVLYPALADNWQMS) the chain is on the periplasmic side. Residues 257–277 (AAQIGFLYAAIPLGAAIGALT) traverse the membrane as a helical segment. The Cytoplasmic portion of the chain corresponds to 278–287 (SGKLAHSARP). A helical membrane pass occupies residues 288-307 (GLLMLLSTLGSFLAIGLFGL). Topologically, residues 308–313 (MPMWIL) are periplasmic. A helical membrane pass occupies residues 314–336 (GVVCLALFGWLSAVSSLLQYTML). The Cytoplasmic segment spans residues 337–356 (QTQTPEVMLGRINGLWTAQN). A helical transmembrane segment spans residues 357–377 (VTGDAIGAALLGGLGAMMTPV). Position 378 (Ala378) is a topological domain, periplasmic. The chain crosses the membrane as a helical span at residues 379-399 (SASASGFGLLIIGVLLLLVLV). Residues 400-416 (ELRHFRQTPPQVTASDS) are Cytoplasmic-facing.

Belongs to the major facilitator superfamily. EntS (TC 2.A.1.38) family.

Its subcellular location is the cell inner membrane. Functionally, component of an export pathway for enterobactin. The chain is Enterobactin exporter EntS from Shigella dysenteriae serotype 1 (strain Sd197).